The chain runs to 264 residues: ATP synthase subunit a (264 aa).

6 helical membrane-spanning segments follow: residues 27–47 (VHLDTLLFSIISGAIFLFVFS), 87–107 (VGPLALTIFCWVFIMNAIDLI), 131–151 (DISGTLGLSIGVFFLIIFYTI), 172–192 (LLIPVNLALESVTLLAKPVSL), 196–216 (LFGNMYAGELIFILIAVMYMA), and 230–250 (LAWAIFHILVITLQAFIFMML).

Belongs to the ATPase A chain family. F-type ATPases have 2 components, CF(1) - the catalytic core - and CF(0) - the membrane proton channel. CF(1) has five subunits: alpha(3), beta(3), gamma(1), delta(1), epsilon(1). CF(0) has three main subunits: a(1), b(2) and c(9-12). The alpha and beta chains form an alternating ring which encloses part of the gamma chain. CF(1) is attached to CF(0) by a central stalk formed by the gamma and epsilon chains, while a peripheral stalk is formed by the delta and b chains.

Its subcellular location is the cell inner membrane. Key component of the proton channel; it plays a direct role in the translocation of protons across the membrane. The sequence is that of ATP synthase subunit a from Pasteurella multocida (strain Pm70).